Reading from the N-terminus, the 430-residue chain is MMVLRMKVEWYLDFVDLNYEPGRDELIVEYYFEPNGVSPEEAAGRIASESSIGTWTTLWKLPEMAKRSMAKVFYLEKHGEGYIAKIAYPLTLFEEGSLVQLFSAVAGNVFGMKALKNLRLLDFHPPYEYLRHFKGPQFGVQGIREFMGVKDRPLTATVPKPKMGWSVEEYAEIAYELWSGGIDLLKDDENFTSFPFNRFEERVRKLYRVRDRVEAETGETKEYLINITGPVNIMEKRAEMVANEGGQYVMIDIVVAGWSALQYMREVTEDLGLAIHAHRAMHAAFTRNPRHGITMLALAKAARMIGVDQIHTGTAVGKMAGNYEEIKRINDFLLSKWEHIRPVFPVASGGLHPGLMPELIRLFGKDLVIQAGGGVMGHPDGPRAGAKALRDAIDAAIEGVDLDEKAKSSPELKKSLREVGLSKAKVGVQH.

The active-site Proton acceptor is Lys160. Lys162 is a binding site for substrate. Lys186, Asp188, and Glu189 together coordinate Mg(2+). N6-carboxylysine is present on Lys186. Catalysis depends on His278, which acts as the Proton acceptor. Substrate is bound by residues Arg279, His311, 348–350, and 370–373; these read SGG and QAGG.

Belongs to the RuBisCO large chain family. Type III subfamily. As to quaternary structure, homodimer or homodecamer. In contrast to form I RuBisCO, the form III RuBisCO is composed solely of large subunits. It depends on Mg(2+) as a cofactor.

The catalysed reaction is 2 (2R)-3-phosphoglycerate + 2 H(+) = D-ribulose 1,5-bisphosphate + CO2 + H2O. It catalyses the reaction D-ribulose 1,5-bisphosphate + O2 = 2-phosphoglycolate + (2R)-3-phosphoglycerate + 2 H(+). Its function is as follows. Catalyzes the addition of molecular CO(2) and H(2)O to ribulose 1,5-bisphosphate (RuBP), generating two molecules of 3-phosphoglycerate (3-PGA). Functions in an archaeal AMP degradation pathway, together with AMP phosphorylase and R15P isomerase. The polypeptide is Ribulose bisphosphate carboxylase (Pyrococcus horikoshii (strain ATCC 700860 / DSM 12428 / JCM 9974 / NBRC 100139 / OT-3)).